The chain runs to 513 residues: Protein CYCLOPS (513 aa).

2 disordered regions span residues 329–380 and 395–435; these read QGRT…STQN and DDRK…AEAK. The segment covering 333 to 347 has biased composition (low complexity); it reads ASGEPSQSESSAAAP. Polar residues predominate over residues 359–380; it reads PSNSNQTLGDSSWKQVGESTQN. 2 consecutive short sequence motifs (nuclear localization signal) follow at residues 397 to 400 and 421 to 424; these read RKRK and KKRR. The stretch at 447 to 513 forms a coiled coil; that stretch reads MQAILKRCEN…ERILSETGKI (67 aa).

Belongs to the CYCLOPS family. In terms of assembly, forms homodimers. Interacts with CCAMK. As to expression, highly expressed in roots. Expressed in root hairs and nodules. Not detected in leaves or flowers.

The protein localises to the nucleus. Its function is as follows. Involved symbiotic signaling. Required for root infection by symbiotic rhizobia, infection thread (IT) formation, and nodule development. Required for proper induction of early nodulin gene expression. Probably not involved in nodule organogenesis. Involved in arbuscular mycorrhizal (AM) symbiosis. Required for fungal infection of the outer cortical cell layers, and for arbuscule development during the AM symbiosis. Acts downstream of CCAMK. Required for symbiosome formation (i.e. the release of the bacteria from the ITs) and subsequent symbiosome development. Required for the expression of the nodule-specific RPG gene, which controls proper IT growth and is essential for symbiosome formation. Acts upstream of ERN1, a transcriptional regulator required for nodulation. The polypeptide is Protein CYCLOPS (Medicago truncatula (Barrel medic)).